The sequence spans 25 residues: Ocellatin-L1 (25 aa).

Leu-25 is modified (leucine amide).

It belongs to the frog skin active peptide (FSAP) family. Ocellatin subfamily. Expressed by the skin glands.

It is found in the secreted. In terms of biological role, antimicrobial peptide with activity against Gram-negative bacteria but without activity against Gram-positive bacteria. Shows a low activity in stimulating insulin release from rat BRIN-BD11 beta cells, and acts without loss of integrity of the plasma membrane. Has very low hemolytic activity. Shows weak amphipathicity in its alpha-helical conformation. This Leptodactylus laticeps (Santa Fe frog) protein is Ocellatin-L1.